The sequence spans 89 residues: Ragulator complex protein LAMTOR5 homolog (89 aa).

Belongs to the LAMTOR5 family. Part of the Ragulator complex.

The protein resides in the cytoplasm. The protein localises to the lysosome. Its function is as follows. Regulator of the TOR pathway, a signaling cascade that promotes cell growth in response to growth factors, energy levels, and amino acids. As part of the Ragulator complex, may activate the TOR signaling cascade in response to amino acids. This Dictyostelium discoideum (Social amoeba) protein is Ragulator complex protein LAMTOR5 homolog.